The primary structure comprises 2028 residues: Protein Daple (2028 aa).

The Calponin-homology (CH) domain maps to 11–131; the sequence is LFLQSPLVTW…KVLLLVLGCA (121 aa). The interval 222 to 250 is disordered; the sequence is AQHPPSPIKSSSADSTPSPTSSLSSEDKQ. Serine 227 and serine 239 each carry phosphoserine. Positions 229–245 are enriched in low complexity; that stretch reads IKSSSADSTPSPTSSLS. 4 coiled-coil regions span residues 247–428, 456–1017, 1045–1094, and 1139–1393; these read EDKQ…SMNE, ELNE…QGEG, HKEA…SSQI, and LQNH…DQYK. Serine 486 carries the phosphoserine modification. Residues 1011–1024 are compositionally biased toward polar residues; that stretch reads RQNQGEGQHLQNSF. A disordered region spans residues 1011–1043; it reads RQNQGEGQHLQNSFKHPAGKTAASHQGKEAWGP. The span at 1419-1428 shows a compositional bias: basic and acidic residues; that stretch reads KEGSRERLKS. Disordered stretches follow at residues 1419 to 1724 and 1736 to 1803; these read KEGS…GAKM and AAPT…SLSR. Composition is skewed to low complexity over residues 1439–1450, 1517–1534, and 1568–1588; these read SSDPASPAASQP, SRTCSTSATTTAPSNSTP, and SRPSSLESSRNTSSNSSPLNL. Serine 1444 carries the phosphoserine modification. A compositionally biased stretch (polar residues) spans 1589 to 1604; the sequence is KGSSEQLHGRSESFSS. Residue serine 1601 is modified to Phosphoserine. Positions 1661–1691 match the GBA motif; it reads CSASPSSEMVTLEEFLEESNRSSPTHDTPSC. Positions 1689-1704 are enriched in basic and acidic residues; that stretch reads PSCRDDLLSDYFRKAS. Low complexity predominate over residues 1792–1803; sequence HAPASRSASLSR. Serine 1806 is modified (phosphoserine). A disordered region spans residues 1816–2021; the sequence is SGPEACKQES…PEPGGDPQTV (206 aa). Residues 1842-1855 show a composition bias toward polar residues; the sequence is SHTLQSPAPPSSHS. The span at 1879–1897 shows a compositional bias: basic and acidic residues; that stretch reads RPLDTRRFSLAPPKEERLA. Positions 1902-1924 are enriched in low complexity; sequence SATAPAIATAGAGAAAAGSGSNS. Threonine 1954 bears the Phosphothreonine mark. Residues 2025-2028 carry the PDZ-binding motif; it reads YGCV. Residues 2026-2028 form a DVL1-binding region; it reads GCV.

Belongs to the CCDC88 family. As to quaternary structure, homooligomer. Interacts with DVL1 (via PDZ domain); dissociates following initiation of non-canonical Wnt signaling. Interacts (via C-terminus) with ligand-activated Wnt receptor FZD7; competes with DVL1 for binding to FZD7 and displaces DVL1 from ligand-activated FZD7. Interacts (via GBA motif) with guanine nucleotide-binding protein G(i) alpha subunits GNAI1, GNAI2 and GNAI3 (inactive GDP-bound form); interacts with higher affinity with GNAI1 and GNAI3 than with GNAI2 and interaction leads to G(i) alpha subunit activation. Does not interact with GNAO1.

The protein localises to the cytoplasm. The protein resides in the cell junction. Functionally, required for activation of guanine nucleotide-binding proteins (G-proteins) during non-canonical Wnt signaling. Binds to ligand-activated Wnt receptor FZD7, displacing DVL1 from the FZD7 receptor and leading to inhibition of canonical Wnt signaling. Acts as a non-receptor guanine nucleotide exchange factor by also binding to guanine nucleotide-binding protein G(i) alpha (Gi-alpha) subunits, leading to their activation. Binding to Gi-alpha subunits displaces the beta and gamma subunits from the heterotrimeric G-protein complex, triggering non-canonical Wnt responses such as activation of RAC1 and PI3K-AKT signaling. Promotes apical constriction of cells via ARHGEF18. This chain is Protein Daple (CCDC88C), found in Homo sapiens (Human).